Reading from the N-terminus, the 253-residue chain is Chloride intracellular channel protein 4 (253 aa).

At Ala2 the chain carries N-acetylalanine. The segment at 2–101 (ALSMPLNGLK…EEFLEEVLCP (100 aa)) is required for insertion into the membrane. The residue at position 4 (Ser4) is a Phosphoserine. Lys24 bears the N6-acetyllysine mark. The G-site motif lies at 35–38 (CPFS). Residues 37–57 (FSQRLFMILWLKGVVFSVTTV) form a helical membrane-spanning segment. A GST C-terminal domain is found at 81–244 (NSEVKTDVNK…PSDKEVEIAY (164 aa)). The residue at position 130 (Lys130) is an N6-acetyllysine. 3 positions are modified to phosphoserine: Ser132, Ser167, and Ser236. Tyr244 is subject to Phosphotyrosine.

This sequence belongs to the chloride channel CLIC family. As to quaternary structure, component of a multimeric complex consisting of several cytoskeletal proteins, including actin, ezrin, alpha-actinin, gelsolin, IQGAP1 and CLIC5A. Binds directly to brain dynamin I in a complex containing actin, tubulin and 14-3-3 isoforms. Monomer. Interacts with HRH3. Interacts with AKAP9. As to expression, detected in epithelial cells from colon, esophagus and kidney (at protein level). Expression is prominent in heart, kidney, placenta and skeletal muscle.

It is found in the cytoplasm. Its subcellular location is the cytoskeleton. The protein localises to the microtubule organizing center. The protein resides in the centrosome. It localises to the cytoplasmic vesicle membrane. It is found in the nucleus. Its subcellular location is the cell membrane. The protein localises to the mitochondrion. The protein resides in the cell junction. It localises to the endoplasmic reticulum membrane. It catalyses the reaction chloride(in) = chloride(out). The catalysed reaction is thiocyanate(in) = thiocyanate(out). The enzyme catalyses nitrate(in) = nitrate(out). It carries out the reaction iodide(out) = iodide(in). It catalyses the reaction bromide(in) = bromide(out). The catalysed reaction is fluoride(in) = fluoride(out). The enzyme catalyses choline(out) = choline(in). Its activity is regulated as follows. Inhibited by rapamycin, amphotericin B and IAA-94. In terms of biological role, in the soluble state, catalyzes glutaredoxin-like thiol disulfide exchange reactions with reduced glutathione as electron donor. Can insert into membranes and form voltage-dependent multi-ion conductive channels. Membrane insertion seems to be redox-regulated and may occur only under oxidizing conditions. Has alternate cellular functions like a potential role in angiogenesis or in maintaining apical-basolateral membrane polarity during mitosis and cytokinesis. Could also promote endothelial cell proliferation and regulate endothelial morphogenesis (tubulogenesis). Promotes cell-surface expression of HRH3. This Homo sapiens (Human) protein is Chloride intracellular channel protein 4.